We begin with the raw amino-acid sequence, 364 residues long: Aromatic prenyltransferase (364 aa).

Positions 1-22 (MDRNQWTLALMALMRFAHRAFI) are cleaved as a signal peptide. Asn142 and Asn337 each carry an N-linked (GlcNAc...) asparagine glycan.

This sequence belongs to the aromatic prenyltransferase family.

Its function is as follows. Prenyltransferase that attaches isoprenoid moieties to carbon atoms of aromatic substrates in an enzyme-catalyzed Friedel-Crafts reaction. The chain is Aromatic prenyltransferase from Talaromyces marneffei (strain ATCC 18224 / CBS 334.59 / QM 7333) (Penicillium marneffei).